The chain runs to 534 residues: High affinity cGMP-specific 3',5'-cyclic phosphodiesterase 9A (534 aa).

The PDEase domain occupies Pro-175–Asp-496. His-251 acts as the Proton donor in catalysis. 3',5'-cyclic GMP is bound at residue His-251–His-255. 3 residues coordinate Zn(2+): His-255, His-291, and Asp-292. Asp-292 is a binding site for 3',5'-cyclic GMP. A Mg(2+)-binding site is contributed by Asp-292. Position 318 is a phosphoserine (Ser-318). Residues Asp-401, Tyr-423, and Ala-451 to Gln-452 each bind 3',5'-cyclic GMP. Residue Asp-401 coordinates Zn(2+). Positions Lys-500–Asn-534 are disordered. Positions Thr-517–Asn-534 are enriched in basic and acidic residues.

Belongs to the cyclic nucleotide phosphodiesterase family. PDE9 subfamily. As to quaternary structure, homodimer. Zn(2+) is required as a cofactor. The cofactor is Mg(2+). Highly expressed in kidney. Lower levels in liver, lung and brain. Widely expressed in brain, with highest expression in cerebellar Purkinje cells. Present in heart (at protein level).

Its subcellular location is the cell projection. It localises to the ruffle membrane. The protein localises to the cytoplasm. The protein resides in the perinuclear region. It is found in the golgi apparatus. Its subcellular location is the endoplasmic reticulum. It localises to the cell membrane. The protein localises to the sarcolemma. The enzyme catalyses 3',5'-cyclic GMP + H2O = GMP + H(+). It functions in the pathway purine metabolism; 3',5'-cyclic GMP degradation; GMP from 3',5'-cyclic GMP: step 1/1. Its activity is regulated as follows. Inhibited by SCH 51866 and moderately, by zaprinast. Specifically inhibited by PF-04447943 (6-[(3S,4S)-4-methyl-1-(pyrimidin-2-ylmethyl)pyrrolidin-3-yl]-1-(tetrahydro-2H-pyran-4-yl)-1,5-dihydro-4H-pyrazolo[3,4-d]pyrimidin-4-one). Functionally, specifically hydrolyzes the second messenger cGMP, which is a key regulator of many important physiological processes. Highly specific: compared to other members of the cyclic nucleotide phosphodiesterase family, has the highest affinity and selectivity for cGMP. Specifically regulates natriuretic-peptide-dependent cGMP signaling in heart, acting as a regulator of cardiac hypertrophy in myocytes and muscle. Does not regulate nitric oxide-dependent cGMP in heart. Additional experiments are required to confirm whether its ability to hydrolyze natriuretic-peptide-dependent cGMP is specific to heart or is a general feature of the protein. In brain, involved in cognitive function, such as learning and long-term memory. In Mus musculus (Mouse), this protein is High affinity cGMP-specific 3',5'-cyclic phosphodiesterase 9A (Pde9a).